Consider the following 400-residue polypeptide: AA13 family lytic polysaccharide monooxygenase A (400 aa).

An N-terminal signal peptide occupies residues 1–17; that stretch reads MLLTVLAVVGCFTAVNG. Position 18 (His18) interacts with Cu(2+). Methylhistidine is present on His18. One can recognise a Chitin-binding type-4 domain in the interval 18 to 247; that stretch reads HGYLTIPASR…AQVYLHCADI (230 aa). 7 disulfide bridges follow: Cys39-Cys42, Cys65-Cys244, Cys101-Cys202, Cys117-Cys144, Cys152-Cys160, Cys166-Cys172, and Cys180-Cys191. His108 contacts Cu(2+). An N-linked (GlcNAc...) asparagine glycan is attached at Asn119. A Cu(2+)-binding site is contributed by Tyr241. Residues 254 to 287 form a disordered region; the sequence is GGTTSKSTTSTTSTTSTSRSTSTSAPTTTSSAST. Residues 257–287 are compositionally biased toward low complexity; that stretch reads TSKSTTSTTSTTSTSRSTSTSAPTTTSSAST. The CBM20 domain maps to 293 to 400; it reads TTQASLIPVT…TTATAAASWR (108 aa). Asn379 carries N-linked (GlcNAc...) asparagine glycosylation.

The protein belongs to the polysaccharide monooxygenase AA13 family. The cofactor is Cu(2+). Post-translationally, O-mannosylated.

It localises to the secreted. The catalysed reaction is starch + reduced acceptor + O2 = D-glucono-1,5-lactone-terminated malto-oligosaccharides + short-chain malto-oligosaccharides + acceptor + H2O.. Activity is inhibited by both beta-cyclodextrin or amylose that block the access to the active site. In terms of biological role, starch-active lytic polysaccharide monooxygenase that oxidizes the C1 position of starch substrates. Catalysis by LPMOs requires the reduction of the active-site copper from Cu(II) to Cu(I) by a reducing agent and H(2)O(2) or O(2) as a cosubstrate. This Aspergillus terreus (strain NIH 2624 / FGSC A1156) protein is AA13 family lytic polysaccharide monooxygenase A.